We begin with the raw amino-acid sequence, 399 residues long: Yellow-related salivary protein M10 (399 aa).

An N-terminal signal peptide occupies residues 1-18; that stretch reads MKFILSVLALASFQHVFC. Residues Asn-29 and Asn-83 are each glycosylated (N-linked (GlcNAc...) asparagine).

Belongs to the major royal jelly protein family. In terms of tissue distribution, salivary gland (at protein level).

The protein resides in the secreted. Probably modulates blood feeding of sand flies on vertebrate species by binding and sequestering different mediators involved in the host response. Functions as a chemoattractant for host neutrophils; likely acts through a G-protein-coupled receptor and effect is dependent on calcium influx and phosphatidylinositol 3-kinases (PI3K) activity. Functionally, (Microbial infection) Probably enhances infection caused by Leishmania species in the host through augmentation of host neutrophil recruitment into the skin. The sequence is that of Yellow-related salivary protein M10 from Phlebotomus duboscqi (Sandfly).